The chain runs to 444 residues: D(2) dopamine receptor (444 aa).

Residues 1–37 are Extracellular-facing; sequence MDPLNLSWYDDDLERQNWSRPFNGSEGKPDRPHYNYY. N-linked (GlcNAc...) asparagine glycans are attached at residues Asn5, Asn17, and Asn23. A helical transmembrane segment spans residues 38–60; it reads AMLLTLLIFIIVFGNVLVCMAVS. The Cytoplasmic segment spans residues 61-70; the sequence is REKALQTTTN. The helical transmembrane segment at 71-93 threads the bilayer; sequence YLIVSLAVADLLVATLVMPWVVY. At 94–108 the chain is on the extracellular side; that stretch reads LEVVGEWKFSRIHCD. Cys107 and Cys182 are disulfide-bonded. The helical transmembrane segment at 109–130 threads the bilayer; the sequence is IFVTLDVMMCTASILNLCAISI. The Cytoplasmic portion of the chain corresponds to 131-151; it reads DRYTAVAMPMLYNTRYSSKRR. The chain crosses the membrane as a helical span at residues 152–172; it reads VTVMIAIVWVLSFTISCPLLF. At 173-188 the chain is on the extracellular side; the sequence is GLNNTDQNECIIANPA. Residues 189–213 traverse the membrane as a helical segment; sequence FVVYSSIVSFYVPFIVTLLVYIKIY. Residues 211 to 374 are interaction with PPP1R9B; the sequence is KIYIVLRKRR…SQQKEKKATQ (164 aa). Residues 214–374 are Cytoplasmic-facing; it reads IVLRKRRKRV…SQQKEKKATQ (161 aa). The disordered stretch occupies residues 282 to 329; that stretch reads EMLSSTSPPERTRYSPIPPSHHQLTLPDPSHHGLHSNPDSPAKPEKNG. A helical membrane pass occupies residues 375 to 396; sequence MLAIVLGVFIICWLPFFITHIL. Topologically, residues 397 to 410 are extracellular; it reads NIHCDCNIPPVLYS. Cys400 and Cys402 form a disulfide bridge. A helical membrane pass occupies residues 411-432; that stretch reads AFTWLGYVNSAVNPIIYTTFNI. Topologically, residues 433-444 are cytoplasmic; it reads EFRKAFMKILHC. Cys444 is lipidated: S-palmitoyl cysteine.

The protein belongs to the G-protein coupled receptor 1 family. As to quaternary structure, forms homo- and heterooligomers with DRD4. The interaction with DRD4 may modulate agonist-induced downstream signaling. Interacts with CADPS and CADPS2. Interacts with GPRASP1, PPP1R9B and CLIC6. Interacts with ARRB2. Interacts with HTR2A. Interacts with DRD1. Interacts with KCNA2. Palmitoylated. Palmitoylation which is required for proper localization to the plasma membrane and stability of the receptor could be carried on by ZDHHC4, ZDHHC3 and ZDHHC8. Expressed in retinal hyaloid vessels at postnatal day 6. In terms of tissue distribution, expressed in the pituitary gland, stratum, brain stem and cortex. As to expression, expressed in the brain stem.

Its subcellular location is the cell membrane. The protein localises to the golgi apparatus membrane. Functionally, dopamine receptor whose activity is mediated by G proteins which inhibit adenylyl cyclase. Positively regulates postnatal regression of retinal hyaloid vessels via suppression of VEGFR2/KDR activity, downstream of OPN5. This Mus musculus (Mouse) protein is D(2) dopamine receptor (Drd2).